The sequence spans 102 residues: Small ribosomal subunit protein uS10 (102 aa).

It belongs to the universal ribosomal protein uS10 family. As to quaternary structure, part of the 30S ribosomal subunit.

In terms of biological role, involved in the binding of tRNA to the ribosomes. The polypeptide is Small ribosomal subunit protein uS10 (Bifidobacterium longum subsp. infantis (strain ATCC 15697 / DSM 20088 / JCM 1222 / NCTC 11817 / S12)).